We begin with the raw amino-acid sequence, 56 residues long: Protein hunchback (56 aa).

3 C2H2-type zinc fingers span residues 1-5 (HLRNH), 11-33 (FKCD…LKSH), and 39-56 (FRCS…SLKL).

Belongs to the hunchback C2H2-type zinc-finger protein family.

It localises to the nucleus. In terms of biological role, gap class segmentation protein that controls development of head structures. This is Protein hunchback (hb) from Euscelis plebejus (Leafhopper).